The chain runs to 357 residues: sn-glycerol-3-phosphate import ATP-binding protein UgpC (357 aa).

Positions 4-235 constitute an ABC transporter domain; it reads LKLQAVTKSY…PASLFVASFI (232 aa). 37 to 44 is a binding site for ATP; sequence GPSGCGKS.

It belongs to the ABC transporter superfamily. sn-glycerol-3-phosphate importer (TC 3.A.1.1.3) family. The complex is composed of two ATP-binding proteins (UgpC), two transmembrane proteins (UgpA and UgpE) and a solute-binding protein (UgpB).

It localises to the cell inner membrane. The catalysed reaction is sn-glycerol 3-phosphate(out) + ATP + H2O = sn-glycerol 3-phosphate(in) + ADP + phosphate + H(+). Its function is as follows. Part of the ABC transporter complex UgpBAEC involved in sn-glycerol-3-phosphate (G3P) import. Responsible for energy coupling to the transport system. This is sn-glycerol-3-phosphate import ATP-binding protein UgpC from Yersinia pseudotuberculosis serotype I (strain IP32953).